A 158-amino-acid chain; its full sequence is Cell number regulator 11 (158 aa).

2 consecutive transmembrane segments (helical) span residues 49–67 (FGDLHTCCLTLWCPCVTFG) and 78–94 (TCCMSGTLYYLLSTIGW).

It belongs to the cornifelin family.

The protein localises to the membrane. This is Cell number regulator 11 (CNR11) from Zea mays (Maize).